The chain runs to 365 residues: Chorismate synthase (365 aa).

R47 contributes to the NADP(+) binding site. FMN contacts are provided by residues 124-126, G287, 302-306, and R328; these read RAS and KPTAT.

The protein belongs to the chorismate synthase family. As to quaternary structure, homotetramer. FMNH2 is required as a cofactor.

The catalysed reaction is 5-O-(1-carboxyvinyl)-3-phosphoshikimate = chorismate + phosphate. It participates in metabolic intermediate biosynthesis; chorismate biosynthesis; chorismate from D-erythrose 4-phosphate and phosphoenolpyruvate: step 7/7. In terms of biological role, catalyzes the anti-1,4-elimination of the C-3 phosphate and the C-6 proR hydrogen from 5-enolpyruvylshikimate-3-phosphate (EPSP) to yield chorismate, which is the branch point compound that serves as the starting substrate for the three terminal pathways of aromatic amino acid biosynthesis. This reaction introduces a second double bond into the aromatic ring system. The protein is Chorismate synthase of Prochlorococcus marinus (strain MIT 9312).